Reading from the N-terminus, the 362-residue chain is Endolytic peptidoglycan transglycosylase RlpA (362 aa).

A signal peptide spans 1–17 (MRKQWLGICIAAGMLAA). Cys-18 is lipidated: N-palmitoyl cysteine. Residue Cys-18 is the site of S-diacylglycerol cysteine attachment. The disordered stretch occupies residues 198–276 (PDLSGGAGTS…PSTTPATSPA (79 aa)). A compositionally biased stretch (low complexity) spans 262–276 (PVVTAPSTTPATSPA). The 77-residue stretch at 285–361 (QSASGNFMVQ…AQLQSFITTA (77 aa)) folds into the SPOR domain.

It belongs to the RlpA family.

Its subcellular location is the cell membrane. Lytic transglycosylase with a strong preference for naked glycan strands that lack stem peptides. This chain is Endolytic peptidoglycan transglycosylase RlpA, found in Escherichia coli O157:H7.